Here is a 379-residue protein sequence, read N- to C-terminus: Protein hairy (379 aa).

The tract at residues 20–50 is disordered; that stretch reads STQQQQQQQQHKEAPIKSDRRSNKPIMEKRR. The segment covering 29 to 47 has biased composition (basic and acidic residues); sequence QHKEAPIKSDRRSNKPIME. Residues 36–55 are interaction with Topors; sequence KSDRRSNKPIMEKRRRARIN. Positions 38-95 constitute a bHLH domain; that stretch reads DRRSNKPIMEKRRRARINNCLNELKTLILDATKKDPARHSKLEKADILEKTVKHLQEL. The 30-residue stretch at 114-143 folds into the Orange domain; the sequence is FKAGFADCANEVSRFPGLDSTQRRRLLQHL. 2 disordered regions span residues 167–208 and 298–345; these read QSLH…NTTA and QRTA…VKPS. Low complexity-rich tracts occupy residues 182-207 and 301-328; these read PEQE…TNTT and ASTG…GSYA. The WRPW motif motif lies at 376–379; that stretch reads WRPW.

In terms of assembly, transcription repression requires formation of a complex with a corepressor protein (Groucho).

It localises to the nucleus. Its function is as follows. Pair-rule protein that regulates embryonic segmentation and adult bristle patterning. Transcriptional repressor of genes that require a bHLH protein for their transcription (e.g. ftz). The chain is Protein hairy from Drosophila virilis (Fruit fly).